Here is a 246-residue protein sequence, read N- to C-terminus: Pyridoxine 5'-phosphate synthase (246 aa).

Asn-12 provides a ligand contact to 3-amino-2-oxopropyl phosphate. 14-15 is a 1-deoxy-D-xylulose 5-phosphate binding site; sequence DH. Residue Arg-23 participates in 3-amino-2-oxopropyl phosphate binding. His-48 functions as the Proton acceptor in the catalytic mechanism. 2 residues coordinate 1-deoxy-D-xylulose 5-phosphate: Arg-50 and His-55. The active-site Proton acceptor is Glu-75. Residue Thr-105 coordinates 1-deoxy-D-xylulose 5-phosphate. The active-site Proton donor is the His-196. 3-amino-2-oxopropyl phosphate is bound by residues Gly-197 and 218 to 219; that span reads GH.

It belongs to the PNP synthase family. In terms of assembly, homooctamer; tetramer of dimers.

The protein resides in the cytoplasm. It carries out the reaction 3-amino-2-oxopropyl phosphate + 1-deoxy-D-xylulose 5-phosphate = pyridoxine 5'-phosphate + phosphate + 2 H2O + H(+). It functions in the pathway cofactor biosynthesis; pyridoxine 5'-phosphate biosynthesis; pyridoxine 5'-phosphate from D-erythrose 4-phosphate: step 5/5. Its function is as follows. Catalyzes the complicated ring closure reaction between the two acyclic compounds 1-deoxy-D-xylulose-5-phosphate (DXP) and 3-amino-2-oxopropyl phosphate (1-amino-acetone-3-phosphate or AAP) to form pyridoxine 5'-phosphate (PNP) and inorganic phosphate. This Pseudomonas syringae pv. syringae (strain B728a) protein is Pyridoxine 5'-phosphate synthase.